The sequence spans 959 residues: Isoleucine--tRNA ligase (959 aa).

Residues 60–70 (PYANGSLHMGH) carry the 'HIGH' region motif. Glu-569 contributes to the L-isoleucyl-5'-AMP binding site. Positions 610 to 614 (KMSKS) match the 'KMSKS' region motif. Lys-613 is a binding site for ATP. Residues Cys-928, Cys-931, Cys-948, and Cys-951 each contribute to the Zn(2+) site.

This sequence belongs to the class-I aminoacyl-tRNA synthetase family. IleS type 1 subfamily. Monomer. Zn(2+) is required as a cofactor.

The protein resides in the cytoplasm. The catalysed reaction is tRNA(Ile) + L-isoleucine + ATP = L-isoleucyl-tRNA(Ile) + AMP + diphosphate. Catalyzes the attachment of isoleucine to tRNA(Ile). As IleRS can inadvertently accommodate and process structurally similar amino acids such as valine, to avoid such errors it has two additional distinct tRNA(Ile)-dependent editing activities. One activity is designated as 'pretransfer' editing and involves the hydrolysis of activated Val-AMP. The other activity is designated 'posttransfer' editing and involves deacylation of mischarged Val-tRNA(Ile). This is Isoleucine--tRNA ligase from Crocosphaera subtropica (strain ATCC 51142 / BH68) (Cyanothece sp. (strain ATCC 51142)).